Here is a 266-residue protein sequence, read N- to C-terminus: Undecaprenyl-diphosphatase (266 aa).

The next 7 membrane-spanning stretches (helical) occupy residues Asn-41–Trp-61, Tyr-82–Asp-102, Ala-106–Leu-126, Ile-140–Leu-160, Leu-180–Gly-200, Ile-213–Cys-233, and Leu-245–Leu-265.

It belongs to the UppP family.

It is found in the cell inner membrane. It carries out the reaction di-trans,octa-cis-undecaprenyl diphosphate + H2O = di-trans,octa-cis-undecaprenyl phosphate + phosphate + H(+). Its function is as follows. Catalyzes the dephosphorylation of undecaprenyl diphosphate (UPP). Confers resistance to bacitracin. The sequence is that of Undecaprenyl-diphosphatase from Bacteroides fragilis (strain YCH46).